Consider the following 228-residue polypeptide: Nuclear phosphoprotein UL3 homolog (228 aa).

It belongs to the alphaherpesvirinae HHV-1 UL3 family. In terms of processing, phosphorylated.

The protein localises to the host nucleus. The polypeptide is Nuclear phosphoprotein UL3 homolog (MDV015) (Gallus gallus (Chicken)).